The chain runs to 153 residues: Calmodulin-like protein 3 (153 aa).

4 EF-hand domains span residues 1–36 (MDQA…LGIY), 37–72 (IPDK…IMEE), 74–109 (DEEE…LGLK), and 112–147 (RTLE…GGFA). 19 residues coordinate Ca(2+): aspartate 14, asparagine 16, aspartate 18, lysine 20, glutamate 25, aspartate 50, asparagine 52, aspartate 54, tyrosine 56, glutamate 61, aspartate 87, asparagine 89, aspartate 91, glutamate 98, aspartate 125, aspartate 127, aspartate 129, methionine 131, and glutamate 136.

Belongs to the calmodulin family.

Functionally, potential calcium sensor. The protein is Calmodulin-like protein 3 (CML3) of Arabidopsis thaliana (Mouse-ear cress).